A 507-amino-acid polypeptide reads, in one-letter code: ATP synthase subunit alpha, chloroplastic (507 aa).

An ATP-binding site is contributed by 170-177 (GDRQTGKT). Residue Thr-257 is modified to Phosphothreonine.

This sequence belongs to the ATPase alpha/beta chains family. F-type ATPases have 2 components, CF(1) - the catalytic core - and CF(0) - the membrane proton channel. CF(1) has five subunits: alpha(3), beta(3), gamma(1), delta(1), epsilon(1). CF(0) has four main subunits: a, b, b' and c.

The protein localises to the plastid. Its subcellular location is the chloroplast thylakoid membrane. The enzyme catalyses ATP + H2O + 4 H(+)(in) = ADP + phosphate + 5 H(+)(out). In terms of biological role, produces ATP from ADP in the presence of a proton gradient across the membrane. The alpha chain is a regulatory subunit. The sequence is that of ATP synthase subunit alpha, chloroplastic from Draba nemorosa (Woodland whitlowgrass).